The following is a 137-amino-acid chain: Nucleoside diphosphate kinase (137 aa).

ATP contacts are provided by Lys9, Phe57, Arg85, Thr91, Arg102, and Asn112. His115 serves as the catalytic Pros-phosphohistidine intermediate.

Belongs to the NDK family. In terms of assembly, homotetramer. Mg(2+) serves as cofactor.

It is found in the cytoplasm. It catalyses the reaction a 2'-deoxyribonucleoside 5'-diphosphate + ATP = a 2'-deoxyribonucleoside 5'-triphosphate + ADP. It carries out the reaction a ribonucleoside 5'-diphosphate + ATP = a ribonucleoside 5'-triphosphate + ADP. In terms of biological role, major role in the synthesis of nucleoside triphosphates other than ATP. The ATP gamma phosphate is transferred to the NDP beta phosphate via a ping-pong mechanism, using a phosphorylated active-site intermediate. In Sulfurovum sp. (strain NBC37-1), this protein is Nucleoside diphosphate kinase.